We begin with the raw amino-acid sequence, 293 residues long: MARVRTLADLRTEDEADEHTPLYNAETGSRDSDSTSSGGAAPRSMPIRFLELLFPHFSLKSVVLAISIVDWIFYIVTVCLDTELPLIPAANILVHFGANYPPLIKQGQVWRLLLPVFLHANFFHVFFNVFFQLRMGFTIERRYGLLKFTGLYFASAIYGNLLSATAFFCNSLKVGASTAGFGLIGIQICEMALTWHRMRHRDRMLTNMVSFVLLMVLLMFTLNGGSIDQMGHLGGLLCGFSIGMLYNKELNDKPVWYPWASAAAIGILLALPAACFPILYAVDRHCHRDLSYI.

The disordered stretch occupies residues 18–40; that stretch reads EHTPLYNAETGSRDSDSTSSGGA. Helical transmembrane passes span 62-82, 112-132, 148-168, 174-194, 217-237, and 262-282; these read VVLA…CLDT, LLLP…VFFQ, FTGL…TAFF, VGAS…MALT, LLMF…GGLL, and AAAI…LYAV. The active-site Nucleophile is the Ser-177. Residue His-232 is part of the active site.

It belongs to the peptidase S54 family.

It localises to the cytoplasmic vesicle. The protein resides in the secretory vesicle. Its subcellular location is the microneme membrane. It catalyses the reaction Cleaves type-1 transmembrane domains using a catalytic dyad composed of serine and histidine that are contributed by different transmembrane domains.. In terms of biological role, serine protease involved in intramembrane proteolysis and the subsequent release of polypeptides from their membrane anchors. Has no detectable activity towards MIC2. The polypeptide is Rhomboid-like protease 1 (ROM1) (Toxoplasma gondii).